A 559-amino-acid chain; its full sequence is Membrane protein insertase YidC (559 aa).

Residues 6–26 (TVLWMIFSFSLLLLWNNWQIH) form a helical membrane-spanning segment. The tract at residues 34–80 (GGPSPEQNAPATANNQAATNPASNTPAVPNAPAATSAPSSVPGSTAP) is disordered. A compositionally biased stretch (low complexity) spans 42 to 80 (APATANNQAATNPASNTPAVPNAPAATSAPSSVPGSTAP). Transmembrane regions (helical) follow at residues 367-387 (LLGN…AVFY), 441-461 (LPMV…LASV), 480-500 (PYFI…KLNP), and 510-530 (VMMV…AGLV).

The protein belongs to the OXA1/ALB3/YidC family. Type 1 subfamily. As to quaternary structure, interacts with the Sec translocase complex via SecD. Specifically interacts with transmembrane segments of nascent integral membrane proteins during membrane integration.

The protein localises to the cell inner membrane. Required for the insertion and/or proper folding and/or complex formation of integral membrane proteins into the membrane. Involved in integration of membrane proteins that insert both dependently and independently of the Sec translocase complex, as well as at least some lipoproteins. Aids folding of multispanning membrane proteins. This chain is Membrane protein insertase YidC, found in Bordetella avium (strain 197N).